The sequence spans 533 residues: Thromboxane-A synthase (533 aa).

The Cytoplasmic portion of the chain corresponds to 1-10; the sequence is MEVLGLLKFE. The chain crosses the membrane as a helical span at residues 11–31; sequence VSGTIVTVTLLVALLALLKWY. Residues 32–75 are Lumenal-facing; it reads SMSAFSRLEKLGIRHPKPSPFVGNLMFFRQGFWESQLELRERYG. A helical transmembrane segment spans residues 76 to 96; the sequence is PLCGYYLGRRMHVVISEPDMI. The Cytoplasmic portion of the chain corresponds to 97–223; it reads KQVLVENFSN…RRASTFCIPR (127 aa). The helical transmembrane segment at 224-244 threads the bilayer; it reads PLLVLILSFPSIMVPLARILP. At 245 to 335 the chain is on the lumenal side; that stretch reads NKNRDELNGF…FTVDEIVGQA (91 aa). The helical transmembrane segment at 336–356 threads the bilayer; sequence FLFLIAGHEVITNTLSFITYL. Topologically, residues 357-533 are cytoplasmic; it reads LATHPDCQER…NGVYIKIVSR (177 aa). Position 479 (Cys-479) interacts with heme.

It belongs to the cytochrome P450 family. In terms of assembly, monomer. Heme is required as a cofactor. As to expression, expressed primarily in lung, kidney, and spleen.

The protein localises to the endoplasmic reticulum membrane. The enzyme catalyses prostaglandin H2 = thromboxane A2. It carries out the reaction prostaglandin H2 = (12S)-hydroxy-(5Z,8E,10E)-heptadecatrienoate + malonaldehyde. It catalyses the reaction a hydroperoxyeicosatetraenoate = an oxoeicosatetraenoate + H2O. The catalysed reaction is (15S)-hydroperoxy-(5Z,8Z,11Z,13E)-eicosatetraenoate = 15-oxo-(5Z,8Z,11Z,13E)-eicosatetraenoate + H2O. The enzyme catalyses (15S)-hydroperoxy-(5Z,8Z,11Z,13E)-eicosatetraenoate + AH2 = (15S)-hydroxy-(5Z,8Z,11Z,13E)-eicosatetraenoate + A + H2O. Its function is as follows. Catalyzes the conversion of prostaglandin H2 (PGH2) to thromboxane A2 (TXA2), a potent inducer of blood vessel constriction and platelet aggregation. Also cleaves PGH2 to 12-hydroxy-heptadecatrienoicacid (12-HHT) and malondialdehyde, which is known to act as a mediator of DNA damage. 12-HHT and malondialdehyde are formed stoichiometrically in the same amounts as TXA2. Additionally, displays dehydratase activity, toward (15S)-hydroperoxy-(5Z,8Z,11Z,13E)-eicosatetraenoate (15(S)-HPETE) producing 15-KETE and 15-HETE. This Mus musculus (Mouse) protein is Thromboxane-A synthase (Tbxas1).